Consider the following 278-residue polypeptide: Large ribosomal subunit protein uL2 (278 aa).

Disordered regions lie at residues 28–56 (KPVKALTEGKRKSGGRNNQGHATARGIAG) and 221–278 (RGVA…KKKR). Residues 269–278 (IRSRHAKKKR) show a composition bias toward basic residues.

It belongs to the universal ribosomal protein uL2 family. As to quaternary structure, part of the 50S ribosomal subunit. Forms a bridge to the 30S subunit in the 70S ribosome.

Its function is as follows. One of the primary rRNA binding proteins. Required for association of the 30S and 50S subunits to form the 70S ribosome, for tRNA binding and peptide bond formation. It has been suggested to have peptidyltransferase activity; this is somewhat controversial. Makes several contacts with the 16S rRNA in the 70S ribosome. This chain is Large ribosomal subunit protein uL2, found in Rhizorhabdus wittichii (strain DSM 6014 / CCUG 31198 / JCM 15750 / NBRC 105917 / EY 4224 / RW1) (Sphingomonas wittichii).